Here is a 134-residue protein sequence, read N- to C-terminus: Holo-[acyl-carrier-protein] synthase (134 aa).

The Mg(2+) site is built by Asp8 and Glu57.

The protein belongs to the P-Pant transferase superfamily. AcpS family. The cofactor is Mg(2+).

The protein resides in the cytoplasm. It catalyses the reaction apo-[ACP] + CoA = holo-[ACP] + adenosine 3',5'-bisphosphate + H(+). Functionally, transfers the 4'-phosphopantetheine moiety from coenzyme A to a Ser of acyl-carrier-protein. The polypeptide is Holo-[acyl-carrier-protein] synthase (Rhizobium johnstonii (strain DSM 114642 / LMG 32736 / 3841) (Rhizobium leguminosarum bv. viciae)).